Consider the following 62-residue polypeptide: MTLAFQLAVFALIATSSILLIGVPVVFASPDGWSSNKNVVFSGTSLWIGLVFLVGILNSLIS.

Transmembrane regions (helical) follow at residues Ala-8 to Ala-28 and Phe-41 to Ile-61.

This sequence belongs to the PsbZ family. PSII is composed of 1 copy each of membrane proteins PsbA, PsbB, PsbC, PsbD, PsbE, PsbF, PsbH, PsbI, PsbJ, PsbK, PsbL, PsbM, PsbT, PsbY, PsbZ, Psb30/Ycf12, at least 3 peripheral proteins of the oxygen-evolving complex and a large number of cofactors. It forms dimeric complexes.

Its subcellular location is the plastid. It localises to the chloroplast thylakoid membrane. May control the interaction of photosystem II (PSII) cores with the light-harvesting antenna, regulates electron flow through the 2 photosystem reaction centers. PSII is a light-driven water plastoquinone oxidoreductase, using light energy to abstract electrons from H(2)O, generating a proton gradient subsequently used for ATP formation. In Panax ginseng (Korean ginseng), this protein is Photosystem II reaction center protein Z.